The following is a 678-amino-acid chain: Vitrin (678 aa).

The N-terminal stretch at Met-1 to Ser-26 is a signal peptide. Residues Thr-40–Phe-133 enclose the LCCL domain. 2 cysteine pairs are disulfide-bonded: Cys-46–Cys-62 and Cys-66–Cys-86. The segment covering Ser-154–Ala-168 has biased composition (polar residues). Disordered stretches follow at residues Ser-154 to Thr-177 and Thr-199 to Phe-257. The segment covering Thr-199 to Pro-216 has biased composition (low complexity). Over residues Ser-230–Arg-240 the composition is skewed to polar residues. VWFA domains are found at residues Asp-293–Val-478 and Asp-495–Ile-668. N-linked (GlcNAc...) asparagine glycosylation is found at Asn-390 and Asn-520.

In terms of assembly, binds dermatan sulfate and chondroitin sulfate.

The protein resides in the secreted. Its subcellular location is the extracellular space. It localises to the extracellular matrix. In terms of biological role, promotes matrix assembly and cell adhesiveness. Plays a role in spinal cord formation by regulating the proliferation and differentiation of neural stem cells. This chain is Vitrin (VIT), found in Homo sapiens (Human).